A 412-amino-acid polypeptide reads, in one-letter code: Alpha-1-antiproteinase (412 aa).

An N-terminal signal peptide occupies residues 1–24 (MTPSISWGLLLLAGLFCLVPSFLA). Position 33 is a phosphoserine (S33). N100, N133, N264, and N313 each carry an N-linked (GlcNAc...) asparagine glycan. The tract at residues 367-386 (AATVLQAVPMSMPPILNFNK) is RCL. A Phosphoserine modification is found at S377.

This sequence belongs to the serpin family. In terms of assembly, interacts with CELA2A. Interacts with ERGIC3 and LMAN1/ERGIC53. Interacts with PRSS1/Trypsin. In terms of tissue distribution, expressed not only in liver but also in kidney tubule cells, where it is regulated by androgens during development.

It is found in the secreted. In terms of biological role, inhibitor of serine proteases. Its primary target is elastase, but it also has a moderate affinity for plasmin and thrombin. This Mus caroli (Ryukyu mouse) protein is Alpha-1-antiproteinase (Serpina1).